The chain runs to 265 residues: Eukaryotic translation initiation factor 3 subunit J (265 aa).

A compositionally biased stretch (acidic residues) spans 24–34 (AGDEPILDSWD). The tract at residues 24–74 (AGDEPILDSWDEEPKAKKEAAKPKPKPKAGGKKNAKGEEKKEQVLAIDELD) is disordered. Residues 35–45 (EEPKAKKEAAK) show a composition bias toward basic and acidic residues. Positions 46 to 57 (PKPKPKAGGKKN) are enriched in basic residues. 2 coiled-coil regions span residues 78–106 (RKEL…MAEE) and 190–220 (IENI…ARVK).

Belongs to the eIF-3 subunit J family. Component of the eukaryotic translation initiation factor 3 (eIF-3) complex.

It localises to the cytoplasm. Component of the eukaryotic translation initiation factor 3 (eIF-3) complex, which is involved in protein synthesis of a specialized repertoire of mRNAs and, together with other initiation factors, stimulates binding of mRNA and methionyl-tRNAi to the 40S ribosome. The eIF-3 complex specifically targets and initiates translation of a subset of mRNAs involved in cell proliferation. The sequence is that of Eukaryotic translation initiation factor 3 subunit J from Candida glabrata (strain ATCC 2001 / BCRC 20586 / JCM 3761 / NBRC 0622 / NRRL Y-65 / CBS 138) (Yeast).